A 189-amino-acid polypeptide reads, in one-letter code: Flavin prenyltransferase UbiX (189 aa).

FMN is bound by residues 10-12 (GAS), serine 37, 88-91 (SIKT), and arginine 123. Positions 153 and 169 each coordinate dimethylallyl phosphate.

This sequence belongs to the UbiX/PAD1 family.

The enzyme catalyses dimethylallyl phosphate + FMNH2 = prenylated FMNH2 + phosphate. Its pathway is cofactor biosynthesis; ubiquinone biosynthesis. Its function is as follows. Flavin prenyltransferase that catalyzes the synthesis of the prenylated FMN cofactor (prenyl-FMN) for 4-hydroxy-3-polyprenylbenzoic acid decarboxylase UbiD. The prenyltransferase is metal-independent and links a dimethylallyl moiety from dimethylallyl monophosphate (DMAP) to the flavin N5 and C6 atoms of FMN. In Salmonella typhi, this protein is Flavin prenyltransferase UbiX.